The primary structure comprises 263 residues: Endonuclease 8 (263 aa).

Pro-2 acts as the Schiff-base intermediate with DNA in catalysis. Glu-3 (proton donor) is an active-site residue. The active-site Proton donor; for beta-elimination activity is Lys-53. The DNA site is built by Gln-70, Arg-125, and Asn-169. The segment at Lys-229 to His-263 adopts an FPG-type zinc-finger fold. Residue Arg-253 is the Proton donor; for delta-elimination activity of the active site.

It belongs to the FPG family. It depends on Zn(2+) as a cofactor.

The catalysed reaction is 2'-deoxyribonucleotide-(2'-deoxyribose 5'-phosphate)-2'-deoxyribonucleotide-DNA = a 3'-end 2'-deoxyribonucleotide-(2,3-dehydro-2,3-deoxyribose 5'-phosphate)-DNA + a 5'-end 5'-phospho-2'-deoxyribonucleoside-DNA + H(+). In terms of biological role, involved in base excision repair of DNA damaged by oxidation or by mutagenic agents. Acts as a DNA glycosylase that recognizes and removes damaged bases. Has a preference for oxidized pyrimidines, such as thymine glycol, 5,6-dihydrouracil and 5,6-dihydrothymine. Has AP (apurinic/apyrimidinic) lyase activity and introduces nicks in the DNA strand. Cleaves the DNA backbone by beta-delta elimination to generate a single-strand break at the site of the removed base with both 3'- and 5'-phosphates. In Escherichia coli (strain UTI89 / UPEC), this protein is Endonuclease 8.